The chain runs to 705 residues: Polyribonucleotide nucleotidyltransferase (705 aa).

Residues Asp-486 and Asp-492 each contribute to the Mg(2+) site. One can recognise a KH domain in the interval 553–612 (PRIHTMKVSQDKIRDIIGKGGATIRQLTEETGTTIEIEDDGTVKIAATSGEQAEDAINRI). Residues 622-690 (GTLYTGKVVR…RQGRVRLSIK (69 aa)) enclose the S1 motif domain.

This sequence belongs to the polyribonucleotide nucleotidyltransferase family. In terms of assembly, component of the RNA degradosome, which is a multiprotein complex involved in RNA processing and mRNA degradation. It depends on Mg(2+) as a cofactor.

It is found in the cytoplasm. The catalysed reaction is RNA(n+1) + phosphate = RNA(n) + a ribonucleoside 5'-diphosphate. Involved in mRNA degradation. Catalyzes the phosphorolysis of single-stranded polyribonucleotides processively in the 3'- to 5'-direction. In Colwellia psychrerythraea (strain 34H / ATCC BAA-681) (Vibrio psychroerythus), this protein is Polyribonucleotide nucleotidyltransferase.